We begin with the raw amino-acid sequence, 359 residues long: MTLRSLYLQHFRNYEEAYLEFSPQFNLICGPNAKGKTTLLEAIHCLMIGRSFRTSHYPDLIQQQFESFFLEAQFYKHGIEQTLKFGFHTTDRKIIYNSTPLATLSNLLGLIPGVIITPDDVQLVKGSPQLRRQFLDIQIAQVDPLYVHHLNRYGRALKQRNHLLKMKQQISIDSWEQEMTHSAAYLIQQRYQTITHLQNLAQKYYHLLSGENDLLTLEYRSIANSNLSIDEIKKLLVKQLCKNRQREMQIGYTLSGPHKDDLFVAIGGRDIRYFASEGQQRSCVNALHFAEWNRLHQRGDGDFPLFMIDDIGMSLDSNRKDRLVEQLQSVGQVFLTTTDPKFLDHIDADKKIFTLPFYN.

30 to 37 (GPNAKGKT) lines the ATP pocket.

This sequence belongs to the RecF family.

Its subcellular location is the cytoplasm. In terms of biological role, the RecF protein is involved in DNA metabolism; it is required for DNA replication and normal SOS inducibility. RecF binds preferentially to single-stranded, linear DNA. It also seems to bind ATP. This Protochlamydia amoebophila (strain UWE25) protein is DNA replication and repair protein RecF.